We begin with the raw amino-acid sequence, 320 residues long: L-lactate dehydrogenase (320 aa).

Residues 15-16, aspartate 37, lysine 42, tyrosine 68, and 82-83 contribute to the NAD(+) site; these read FV and GA. Substrate is bound by residues glutamine 85, arginine 91, and 123-126; that span reads NPVD. NAD(+) is bound by residues 121–123 and serine 146; that span reads ATN. 151-154 is a binding site for substrate; that stretch reads DSAR. Residues arginine 156 and 168 to 172 contribute to the beta-D-fructose 1,6-bisphosphate site; that span reads QNVHA. The active-site Proton acceptor is histidine 178. Phosphotyrosine is present on tyrosine 223. Threonine 232 serves as a coordination point for substrate.

The protein belongs to the LDH/MDH superfamily. LDH family. As to quaternary structure, homotetramer.

Its subcellular location is the cytoplasm. The catalysed reaction is (S)-lactate + NAD(+) = pyruvate + NADH + H(+). It participates in fermentation; pyruvate fermentation to lactate; (S)-lactate from pyruvate: step 1/1. Its activity is regulated as follows. Allosterically activated by fructose 1,6-bisphosphate (FBP). Catalyzes the conversion of lactate to pyruvate. This chain is L-lactate dehydrogenase, found in Bacillus subtilis (strain 168).